Reading from the N-terminus, the 303-residue chain is uncharacterized protein (303 aa).

NADP(+) contacts are provided by residues 7 to 12 and asparagine 101; that span reads GAGGVG. The Proton donor role is filled by lysine 184. Glutamate 267 lines the NADP(+) pocket.

Belongs to the ketopantoate reductase family.

This is an uncharacterized protein from Bacillus subtilis (strain 168).